The following is a 333-amino-acid chain: 4-hydroxy-3-methylbut-2-enyl diphosphate reductase (333 aa).

Cys-33 is a [4Fe-4S] cluster binding site. 2 residues coordinate (2E)-4-hydroxy-3-methylbut-2-enyl diphosphate: His-62 and His-95. Dimethylallyl diphosphate contacts are provided by His-62 and His-95. Isopentenyl diphosphate contacts are provided by His-62 and His-95. Cys-117 is a [4Fe-4S] cluster binding site. (2E)-4-hydroxy-3-methylbut-2-enyl diphosphate is bound at residue His-145. Position 145 (His-145) interacts with dimethylallyl diphosphate. His-145 contacts isopentenyl diphosphate. Catalysis depends on Glu-147, which acts as the Proton donor. Thr-186 contributes to the (2E)-4-hydroxy-3-methylbut-2-enyl diphosphate binding site. Cys-216 is a [4Fe-4S] cluster binding site. 4 residues coordinate (2E)-4-hydroxy-3-methylbut-2-enyl diphosphate: Ser-244, Ser-245, Asn-246, and Ser-289. Dimethylallyl diphosphate is bound by residues Ser-244, Ser-245, Asn-246, and Ser-289. Isopentenyl diphosphate-binding residues include Ser-244, Ser-245, Asn-246, and Ser-289.

This sequence belongs to the IspH family. It depends on [4Fe-4S] cluster as a cofactor.

The enzyme catalyses isopentenyl diphosphate + 2 oxidized [2Fe-2S]-[ferredoxin] + H2O = (2E)-4-hydroxy-3-methylbut-2-enyl diphosphate + 2 reduced [2Fe-2S]-[ferredoxin] + 2 H(+). The catalysed reaction is dimethylallyl diphosphate + 2 oxidized [2Fe-2S]-[ferredoxin] + H2O = (2E)-4-hydroxy-3-methylbut-2-enyl diphosphate + 2 reduced [2Fe-2S]-[ferredoxin] + 2 H(+). It functions in the pathway isoprenoid biosynthesis; dimethylallyl diphosphate biosynthesis; dimethylallyl diphosphate from (2E)-4-hydroxy-3-methylbutenyl diphosphate: step 1/1. The protein operates within isoprenoid biosynthesis; isopentenyl diphosphate biosynthesis via DXP pathway; isopentenyl diphosphate from 1-deoxy-D-xylulose 5-phosphate: step 6/6. Its function is as follows. Catalyzes the conversion of 1-hydroxy-2-methyl-2-(E)-butenyl 4-diphosphate (HMBPP) into a mixture of isopentenyl diphosphate (IPP) and dimethylallyl diphosphate (DMAPP). Acts in the terminal step of the DOXP/MEP pathway for isoprenoid precursor biosynthesis. This is 4-hydroxy-3-methylbut-2-enyl diphosphate reductase from Corynebacterium diphtheriae (strain ATCC 700971 / NCTC 13129 / Biotype gravis).